Consider the following 419-residue polypeptide: Appendage-associated protein (419 aa).

Residues 1–39 (MIVTYGTVGCPVSRGGSPGCGRRIAEELRLAEDARLRLA) form the signal peptide. Positions 232–262 (ERQKAQRRREERAAKAREELRKELNDIDAKW) form a coiled coil.

Its subcellular location is the secreted. In terms of biological role, associates with actin filament appendages that are formed in the inclusion appendages of the parasitophorous vacuole during infection of the host erythrocyte. The polypeptide is Appendage-associated protein (Anaplasma marginale (strain St. Maries)).